A 223-amino-acid chain; its full sequence is Endonuclease NucS (223 aa).

This sequence belongs to the NucS endonuclease family.

Its subcellular location is the cytoplasm. Cleaves both 3' and 5' ssDNA extremities of branched DNA structures. This chain is Endonuclease NucS, found in Mycolicibacterium gilvum (strain PYR-GCK) (Mycobacterium gilvum (strain PYR-GCK)).